We begin with the raw amino-acid sequence, 284 residues long: Tropomyosin (284 aa).

The stretch at 1 to 273 forms a coiled coil; that stretch reads MDAIKKKMVA…KEKYKAISDE (273 aa). The segment covering 110-130 has biased composition (basic and acidic residues); sequence SGKLEEASKAADESERNRKVL. The disordered stretch occupies residues 110–134; that stretch reads SGKLEEASKAADESERNRKVLENLN.

Belongs to the tropomyosin family. Homodimer.

Tropomyosin, in association with the troponin complex, plays a central role in the calcium dependent regulation of muscle contraction. The chain is Tropomyosin from Perna viridis (Asian green mussel).